The sequence spans 364 residues: tRNA 2-selenouridine synthase (364 aa).

Residues 14–137 enclose the Rhodanese domain; it reads LIADTPIIDV…LRQTTIQATI (124 aa). The S-selanylcysteine intermediate role is filled by C97.

It belongs to the SelU family. As to quaternary structure, monomer.

The enzyme catalyses 5-methylaminomethyl-2-thiouridine(34) in tRNA + selenophosphate + (2E)-geranyl diphosphate + H2O + H(+) = 5-methylaminomethyl-2-selenouridine(34) in tRNA + (2E)-thiogeraniol + phosphate + diphosphate. The catalysed reaction is 5-methylaminomethyl-2-thiouridine(34) in tRNA + (2E)-geranyl diphosphate = 5-methylaminomethyl-S-(2E)-geranyl-thiouridine(34) in tRNA + diphosphate. It catalyses the reaction 5-methylaminomethyl-S-(2E)-geranyl-thiouridine(34) in tRNA + selenophosphate + H(+) = 5-methylaminomethyl-2-(Se-phospho)selenouridine(34) in tRNA + (2E)-thiogeraniol. It carries out the reaction 5-methylaminomethyl-2-(Se-phospho)selenouridine(34) in tRNA + H2O = 5-methylaminomethyl-2-selenouridine(34) in tRNA + phosphate. Involved in the post-transcriptional modification of the uridine at the wobble position (U34) of tRNA(Lys), tRNA(Glu) and tRNA(Gln). Catalyzes the conversion of 2-thiouridine (S2U-RNA) to 2-selenouridine (Se2U-RNA). Acts in a two-step process involving geranylation of 2-thiouridine (S2U) to S-geranyl-2-thiouridine (geS2U) and subsequent selenation of the latter derivative to 2-selenouridine (Se2U) in the tRNA chain. This chain is tRNA 2-selenouridine synthase, found in Escherichia coli O139:H28 (strain E24377A / ETEC).